A 400-amino-acid chain; its full sequence is Acetate kinase (400 aa).

Asparagine 10 provides a ligand contact to Mg(2+). ATP is bound at residue lysine 17. A substrate-binding site is contributed by arginine 91. Catalysis depends on aspartate 150, which acts as the Proton donor/acceptor. ATP-binding positions include 210-214 (HLGNG), 285-287 (DCR), and 333-337 (GIGEN). Glutamate 387 contributes to the Mg(2+) binding site.

This sequence belongs to the acetokinase family. Homodimer. Mg(2+) is required as a cofactor. Requires Mn(2+) as cofactor.

The protein resides in the cytoplasm. It catalyses the reaction acetate + ATP = acetyl phosphate + ADP. Its pathway is metabolic intermediate biosynthesis; acetyl-CoA biosynthesis; acetyl-CoA from acetate: step 1/2. Catalyzes the formation of acetyl phosphate from acetate and ATP. Can also catalyze the reverse reaction. The chain is Acetate kinase from Photorhabdus laumondii subsp. laumondii (strain DSM 15139 / CIP 105565 / TT01) (Photorhabdus luminescens subsp. laumondii).